The sequence spans 365 residues: Zinc finger TRAF-type-containing protein 1-A (365 aa).

The disordered stretch occupies residues 1–56 (MSEEREAPGPLASSSAGLGAEVGQEEVPGGAGPARLLLLPSDSDGPPKKRLRSEAE). The RING-type; degenerate zinc-finger motif lies at 72-117 (CTVCLDLPKASVYQCTNGHLMCAGCFIHLLADSRLKEEQATCPNCR). Residues 113-186 (CPNCRCEISK…PWEGPYHELT (74 aa)) form a TRAF-type zinc finger.

This sequence belongs to the ZFTRAF1 family.

Its subcellular location is the cytoplasm. In Xenopus laevis (African clawed frog), this protein is Zinc finger TRAF-type-containing protein 1-A.